The chain runs to 240 residues: Fatty acid metabolism regulator protein (240 aa).

Positions K6–F74 constitute an HTH gntR-type domain. Residues E34–Q53 constitute a DNA-binding region (H-T-H motif).

In terms of assembly, homodimer.

The protein localises to the cytoplasm. In terms of biological role, multifunctional regulator of fatty acid metabolism. In Shewanella oneidensis (strain ATCC 700550 / JCM 31522 / CIP 106686 / LMG 19005 / NCIMB 14063 / MR-1), this protein is Fatty acid metabolism regulator protein.